The primary structure comprises 940 residues: Reticulon-3 (940 aa).

The span at 1-24 (MAESSAATQSPSVSSSSSGAEPST) shows a compositional bias: low complexity. Disordered regions lie at residues 1 to 32 (MAESSAATQSPSVSSSSSGAEPSTLGGGGGSP), 71 to 91 (SSEIYNPDPTTPLGSETLGSH), and 129 to 182 (DIPC…ALDL). A2 is subject to N-acetylalanine. Topologically, residues 2 to 771 (AESSAATQSP…KKTGFVFGTT (770 aa)) are cytoplasmic. Position 31 is a phosphoserine (S31). A phosphoserine mark is found at S196, S204, S209, S212, S249, and S282. 3 disordered regions span residues 314–335 (AKQQADKSPCTTESTGLDRSEH), 381–405 (KGYLSSTKEAGGKGVPDSSQPISGS), and 428–512 (EVTE…LEGQ). The segment covering 430 to 447 (TEVDSSGESDDTVIEDTT) has biased composition (acidic residues). Basic and acidic residues predominate over residues 472–490 (TSERENKETTSHETVRSEM). The span at 491 to 512 (YENSEQQQAHAETPTQRSLEGQ) shows a compositional bias: polar residues. Phosphoserine is present on S508. T572 is modified (phosphothreonine). A phosphoserine mark is found at S575, S576, and S652. Disordered stretches follow at residues 623–655 (NKLSSSETKNTKSKYSEHSRETNGGAPKVSSDL) and 672–701 (QVQAERMSPGGKLKRTFDPQSGPQNSSDIL). Positions 689–699 (DPQSGPQNSSD) are enriched in polar residues. The Reticulon domain occupies 752–940 (VHDLIFWRDV…LPGIAKKKAE (189 aa)). Positions 772-795 (LIMLLSLAAFSVISVVSYLILALL) form an intramembrane region, helical. Over 796-852 (SVTISFRVYKSVIQAVQKSEEGHPFKAYLDVDITLSSEAFHSYMNAAMVHVNKALKL) the chain is Cytoplasmic. An intramembrane region (helical) is located at residues 853-875 (IIRLFLVEDLVDSLKLAVFMWLM). The Cytoplasmic portion of the chain corresponds to 876–879 (TYVG). The segment at residues 880–902 (AVFNGITLLILAELLVFSVPIVY) is an intramembrane region (helical). Residues 895 to 940 (VFSVPIVYEKYKTQIDHYVGIARDQTKSIVEKIQAKLPGIAKKKAE) form an interaction with FADD region. The Cytoplasmic segment spans residues 903 to 940 (EKYKTQIDHYVGIARDQTKSIVEKIQAKLPGIAKKKAE). An interaction with BACE1 region spans residues 908 to 910 (QID).

In terms of assembly, homodimer. Interacts with RTN4. Isoform 2 interacts with BACE1, BACE2, BCL2 and FADD. Interacts with ATL2. Interacts with TMEM33. Interacts with ATL1. Interacts with ZFYVE27 and with KIF5A in a ZFYVE27-dependent manner. Interacts with RIGI. Interacts with TRIM25. In terms of tissue distribution, present in olfactory bulb, olfactory epithelium and retina (at protein level).

Its subcellular location is the endoplasmic reticulum membrane. The protein localises to the golgi apparatus membrane. In terms of biological role, may be involved in membrane trafficking in the early secretory pathway. Inhibits BACE1 activity and amyloid precursor protein processing. May induce caspase-8 cascade and apoptosis. May favor BCL2 translocation to the mitochondria upon endoplasmic reticulum stress. Induces the formation of endoplasmic reticulum tubules. Acts also as an inflammation-resolving regulator by interacting with both TRIM25 and RIGI, subsequently impairing RIGI 'Lys-63'-linked polyubiquitination leading to IRF3 and NF-kappa-B inhibition. This chain is Reticulon-3 (Rtn3), found in Rattus norvegicus (Rat).